The chain runs to 268 residues: Orotidine 5'-phosphate decarboxylase (268 aa).

Substrate is bound by residues Asp38, 60–62, 92–101, Tyr218, and Arg236; these read KTH and DRKFADIGNT. Lys94 serves as the catalytic Proton donor.

Belongs to the OMP decarboxylase family.

It carries out the reaction orotidine 5'-phosphate + H(+) = UMP + CO2. It functions in the pathway pyrimidine metabolism; UMP biosynthesis via de novo pathway; UMP from orotate: step 2/2. The polypeptide is Orotidine 5'-phosphate decarboxylase (URA3) (Candida parapsilosis (Yeast)).